We begin with the raw amino-acid sequence, 228 residues long: uncharacterized protein (228 aa).

Residues 5-119 (HILIVEDEEK…ELLARIRAAL (115 aa)) enclose the Response regulatory domain. D54 carries the 4-aspartylphosphate modification. The segment at residues 130–228 (GTFLTYDDLR…IRGVGYAIKG (99 aa)) is a DNA-binding region (ompR/PhoB-type).

Phosphorylated by YkoH.

Its subcellular location is the cytoplasm. Probable member of the two-component regulatory system YkoH/YkoG. This is an uncharacterized protein from Bacillus subtilis (strain 168).